The primary structure comprises 1047 residues: Atrial natriuretic peptide receptor 2 (1047 aa).

The first 16 residues, 1-16, serve as a signal peptide directing secretion; the sequence is MALPSLLLVVAALAGG. Residues 17-458 lie on the Extracellular side of the membrane; sequence VRPPGARNLT…DKTPLSTLAI (442 aa). Residues Asn24 and Asn35 are each glycosylated (N-linked (GlcNAc...) asparagine). Cys75 and Cys101 are joined by a disulfide. N-linked (GlcNAc...) asparagine glycosylation is found at Asn161, Asn195, Asn244, Asn277, and Asn349. Residues 459 to 478 traverse the membrane as a helical segment; sequence VALGTGITFIMFGVSSFLIF. Topologically, residues 479 to 1047 are cytoplasmic; the sequence is RKLMLEKELA…GERKGPPGLL (569 aa). Ser513 is modified (phosphoserine). Residues 513-786 enclose the Protein kinase domain; it reads SRLTLSLRGS…PDFGQIKGFI (274 aa). Thr516 carries the phosphothreonine modification. Ser518, Ser522, Ser523, and Ser526 each carry phosphoserine. Position 529 is a phosphothreonine (Thr529). In terms of domain architecture, Guanylate cyclase spans 861 to 991; sequence TIYFSDIVGF…DTVNTASRME (131 aa).

This sequence belongs to the adenylyl cyclase class-4/guanylyl cyclase family. Phosphorylated. Phosphorylation of the protein kinase-like domain is required for full activation by CNP. Post-translationally, glycosylated.

The protein localises to the cell membrane. It carries out the reaction GTP = 3',5'-cyclic GMP + diphosphate. Functionally, receptor for the C-type natriuretic peptide NPPC/CNP hormone. Has guanylate cyclase activity upon binding of its ligand. May play a role in the regulation of skeletal growth. This chain is Atrial natriuretic peptide receptor 2 (Npr2), found in Rattus norvegicus (Rat).